The chain runs to 174 residues: MLAVERFGVNGRDIWIGVIFHGRIQGISFAFTRGELLERIRNLAEFLRGRDVRVSLDVQPSNYTELVYRVLIGELENEKALPELSFEGVTPFERRVYEWLTKNVKRGTVITYGSLAKALETSPRAVGGAMKRNPYPIIVPCHRVVSREGIGHYNLGIEEKKFLLELEGVKEWTG.

The active-site Nucleophile; methyl group acceptor is Cys141.

This sequence belongs to the MGMT family.

It is found in the cytoplasm. The catalysed reaction is a 6-O-methyl-2'-deoxyguanosine in DNA + L-cysteinyl-[protein] = S-methyl-L-cysteinyl-[protein] + a 2'-deoxyguanosine in DNA. It catalyses the reaction a 4-O-methyl-thymidine in DNA + L-cysteinyl-[protein] = a thymidine in DNA + S-methyl-L-cysteinyl-[protein]. Involved in the cellular defense against the biological effects of O6-methylguanine (O6-MeG) and O4-methylthymine (O4-MeT) in DNA. Repairs the methylated nucleobase in DNA by stoichiometrically transferring the methyl group to a cysteine residue in the enzyme. This is a suicide reaction: the enzyme is irreversibly inactivated. This chain is Methylated-DNA--protein-cysteine methyltransferase, found in Thermococcus gammatolerans (strain DSM 15229 / JCM 11827 / EJ3).